Consider the following 330-residue polypeptide: Alpha-1,6-glucosyltransferase (330 aa).

This sequence belongs to the glycosyltransferase group 1 family. The cofactor is Does not require a metal cofactor..

The protein localises to the cytoplasm. The protein operates within protein modification; protein glycosylation. In terms of biological role, catalyzes the transfer of a glucose moiety from UDP-glucose to another glucose that is N-linked to an asparagine within a peptide or protein. Can act in a repetitive manner, and this way it elongates the N-linked glucose by a glycan chain consisting of several alpha-1-&gt;6 linked glucose residues. Is able to add up to six glucose units in vitro. Cannot use UDP-Gal, UDP-GlcNAc or UDP-GalNAc as a substrate donor. The sequence is that of Alpha-1,6-glucosyltransferase from Actinobacillus pleuropneumoniae serotype 7 (strain AP76).